Reading from the N-terminus, the 459-residue chain is Methylenetetrahydrofolate--tRNA-(uracil-5-)-methyltransferase TrmFO (459 aa).

Position 11-16 (11-16 (GAGLAG)) interacts with FAD.

It belongs to the MnmG family. TrmFO subfamily. FAD serves as cofactor.

It is found in the cytoplasm. It carries out the reaction uridine(54) in tRNA + (6R)-5,10-methylene-5,6,7,8-tetrahydrofolate + NADH + H(+) = 5-methyluridine(54) in tRNA + (6S)-5,6,7,8-tetrahydrofolate + NAD(+). The enzyme catalyses uridine(54) in tRNA + (6R)-5,10-methylene-5,6,7,8-tetrahydrofolate + NADPH + H(+) = 5-methyluridine(54) in tRNA + (6S)-5,6,7,8-tetrahydrofolate + NADP(+). Catalyzes the folate-dependent formation of 5-methyl-uridine at position 54 (M-5-U54) in all tRNAs. The chain is Methylenetetrahydrofolate--tRNA-(uracil-5-)-methyltransferase TrmFO from Synechococcus sp. (strain CC9311).